Reading from the N-terminus, the 950-residue chain is UvrABC system protein A (950 aa).

42 to 49 (GLSGSGKS) is a binding site for ATP. The segment at 262-289 (CPVCSYSLPELEPRLFSFNNPMGSCPTC) adopts a C4-type zinc-finger fold. 2 consecutive ABC transporter domains span residues 319–596 (WDKR…EKSV) and 616–945 (VNPG…KYLK). 649-656 (GVSGSGKS) provides a ligand contact to ATP. Residues 748 to 774 (CEACQGDGVIKVEMHFLPDVYVPCEVC) form a C4-type zinc finger.

The protein belongs to the ABC transporter superfamily. UvrA family. Forms a heterotetramer with UvrB during the search for lesions.

It localises to the cytoplasm. The UvrABC repair system catalyzes the recognition and processing of DNA lesions. UvrA is an ATPase and a DNA-binding protein. A damage recognition complex composed of 2 UvrA and 2 UvrB subunits scans DNA for abnormalities. When the presence of a lesion has been verified by UvrB, the UvrA molecules dissociate. The protein is UvrABC system protein A of Neisseria gonorrhoeae.